Consider the following 104-residue polypeptide: L-rhamnose mutarotase (104 aa).

Position 18 (Tyr-18) interacts with substrate. Residue His-22 is the Proton donor of the active site. Residues Tyr-41 and 76 to 77 contribute to the substrate site; that span reads WW.

Belongs to the rhamnose mutarotase family. As to quaternary structure, homodimer.

It localises to the cytoplasm. The catalysed reaction is alpha-L-rhamnose = beta-L-rhamnose. It functions in the pathway carbohydrate metabolism; L-rhamnose metabolism. Its function is as follows. Involved in the anomeric conversion of L-rhamnose. In Escherichia coli O1:K1 / APEC, this protein is L-rhamnose mutarotase.